Reading from the N-terminus, the 550-residue chain is Protein UshA (550 aa).

The first 25 residues, 1–25 (MRFSLSTTAAALAVSLAFAPGWAVA), serve as a signal peptide directing secretion. Residues aspartate 41, histidine 43, aspartate 84, asparagine 116, histidine 217, histidine 252, and glutamine 254 each coordinate a divalent metal cation. A disulfide bridge connects residues cysteine 258 and cysteine 275. Substrate contacts are provided by residues 375-379 (RSKVR) and 498-504 (FNALGGD).

It belongs to the 5'-nucleotidase family. It depends on Co(2+) as a cofactor.

The protein resides in the periplasm. It carries out the reaction UDP-sugar + H2O = UMP + alpha-D-aldose 1-phosphate.. The enzyme catalyses a ribonucleoside 5'-phosphate + H2O = a ribonucleoside + phosphate. Its function is as follows. Degradation of external UDP-glucose to uridine monophosphate and glucose-1-phosphate, which can then be used by the cell. The sequence is that of Protein UshA (ushA) from Yersinia enterocolitica serotype O:8 / biotype 1B (strain NCTC 13174 / 8081).